A 634-amino-acid polypeptide reads, in one-letter code: DNA-directed RNA polymerase subunit gamma (634 aa).

Residues cysteine 74, cysteine 76, cysteine 89, and cysteine 92 each contribute to the Zn(2+) site. Mg(2+) is bound by residues aspartate 471, aspartate 473, and aspartate 475.

The protein belongs to the RNA polymerase beta' chain family. RpoC1 subfamily. As to quaternary structure, in cyanobacteria the RNAP catalytic core is composed of 2 alpha, 1 beta, 1 beta', 1 gamma and 1 omega subunit. When a sigma factor is associated with the core the holoenzyme is formed, which can initiate transcription. It depends on Mg(2+) as a cofactor. The cofactor is Zn(2+).

The enzyme catalyses RNA(n) + a ribonucleoside 5'-triphosphate = RNA(n+1) + diphosphate. Its function is as follows. DNA-dependent RNA polymerase catalyzes the transcription of DNA into RNA using the four ribonucleoside triphosphates as substrates. This chain is DNA-directed RNA polymerase subunit gamma, found in Synechococcus sp. (strain CC9311).